The primary structure comprises 519 residues: ATP synthase subunit alpha 2 (519 aa).

An ATP-binding site is contributed by 179–186 (GDRQTGKT).

The protein belongs to the ATPase alpha/beta chains family. In terms of assembly, F-type ATPases have 2 components, CF(1) - the catalytic core - and CF(0) - the membrane proton channel. CF(1) has five subunits: alpha(3), beta(3), gamma(1), delta(1), epsilon(1). CF(0) has three main subunits: a(1), b(2) and c(9-12). The alpha and beta chains form an alternating ring which encloses part of the gamma chain. CF(1) is attached to CF(0) by a central stalk formed by the gamma and epsilon chains, while a peripheral stalk is formed by the delta and b chains.

It is found in the cell inner membrane. It catalyses the reaction ATP + H2O + 4 H(+)(in) = ADP + phosphate + 5 H(+)(out). Functionally, produces ATP from ADP in the presence of a proton gradient across the membrane. The alpha chain is a regulatory subunit. The chain is ATP synthase subunit alpha 2 from Syntrophus aciditrophicus (strain SB).